Reading from the N-terminus, the 66-residue chain is KEGYLVNKSTGCKYGCFWLGKNENCDKECKAKNQGGSYGYCYSFACWCEGLPESTPTYPLPNKSCS.

Residues 1 to 66 form the LCN-type CS-alpha/beta domain; it reads KEGYLVNKST…TYPLPNKSCS (66 aa). Disulfide bonds link C12–C65, C16–C41, C25–C46, and C29–C48.

This sequence belongs to the long (4 C-C) scorpion toxin superfamily. Sodium channel inhibitor family. Beta subfamily. As to expression, expressed by the venom gland.

Its subcellular location is the secreted. Beta toxin that binds site-4 of sodium channels (Nav) and reduces peak current (observed on Nav1.1/SCN1A, Nav1.2/SCN2A, Nav1.3/SCN3A, Nav1.4/SCN5A, Nav1.5/SCN4A, and Nav1.6/SCN8A (IC(50)=44.9 nM)), shifts the voltage of activation toward more negative potentials (observed on Nav1.6, Nav1.1 (weak), Nav1.2 (weak), and Nav1.7 (weak)), and induces resurgent currents at negative voltages following brief and strong depolarizations (observed on Nav1.6, Nav1.1 (weak), Nav1.2 (weak), and Nav1.4 (weak)). This toxin is only active on crustaceans. This is Toxin Cll1 from Centruroides limpidus (Mexican scorpion).